A 699-amino-acid polypeptide reads, in one-letter code: Polyribonucleotide nucleotidyltransferase (699 aa).

Mg(2+) contacts are provided by Asp-485 and Asp-491. The KH domain occupies Pro-552–Ile-611. The S1 motif domain maps to Gly-621–Lys-689.

This sequence belongs to the polyribonucleotide nucleotidyltransferase family. Component of the RNA degradosome, which is a multiprotein complex involved in RNA processing and mRNA degradation. Mg(2+) is required as a cofactor.

It is found in the cytoplasm. The enzyme catalyses RNA(n+1) + phosphate = RNA(n) + a ribonucleoside 5'-diphosphate. In terms of biological role, involved in mRNA degradation. Catalyzes the phosphorolysis of single-stranded polyribonucleotides processively in the 3'- to 5'-direction. The protein is Polyribonucleotide nucleotidyltransferase of Shewanella sp. (strain W3-18-1).